The primary structure comprises 156 residues: Guanine deaminase (156 aa).

The 132-residue stretch at 1–132 (MNHETFLKRA…KPAEERTIPF (132 aa)) folds into the CMP/dCMP-type deaminase domain. Zn(2+) is bound at residue His53. Glu55 (proton donor) is an active-site residue. Zn(2+) contacts are provided by Cys83 and Cys86.

Belongs to the cytidine and deoxycytidylate deaminase family. Requires Zn(2+) as cofactor.

The enzyme catalyses guanine + H2O + H(+) = xanthine + NH4(+). It functions in the pathway purine metabolism; guanine degradation; xanthine from guanine: step 1/1. Its function is as follows. Catalyzes the hydrolytic deamination of guanine, producing xanthine and ammonia. This Bacillus subtilis (strain 168) protein is Guanine deaminase (guaD).